A 215-amino-acid polypeptide reads, in one-letter code: Pyrrolidone-carboxylate peptidase (215 aa).

Catalysis depends on residues E81, C144, and H168.

This sequence belongs to the peptidase C15 family. Homotetramer.

The protein localises to the cytoplasm. It carries out the reaction Release of an N-terminal pyroglutamyl group from a polypeptide, the second amino acid generally not being Pro.. In terms of biological role, removes 5-oxoproline from various penultimate amino acid residues except L-proline. The polypeptide is Pyrrolidone-carboxylate peptidase (Bacillus velezensis (strain DSM 23117 / BGSC 10A6 / LMG 26770 / FZB42) (Bacillus amyloliquefaciens subsp. plantarum)).